A 479-amino-acid polypeptide reads, in one-letter code: Sucrose-6-phosphate hydrolase (479 aa).

Residues 44-47, glutamine 63, 106-107, 166-167, and glutamate 223 each bind substrate; these read LLND, YS, and RD. Aspartate 47 is an active-site residue.

Belongs to the glycosyl hydrolase 32 family.

The protein localises to the cytoplasm. The catalysed reaction is Hydrolysis of terminal non-reducing beta-D-fructofuranoside residues in beta-D-fructofuranosides.. The protein operates within glycan biosynthesis; sucrose metabolism. This chain is Sucrose-6-phosphate hydrolase (scrB), found in Streptococcus mutans serotype c (strain ATCC 700610 / UA159).